Reading from the N-terminus, the 199-residue chain is Acireductone dioxygenase 1 (199 aa).

Fe(2+)-binding residues include H99, H101, E105, and H144. Ni(2+)-binding residues include H99, H101, E105, and H144.

The protein belongs to the acireductone dioxygenase (ARD) family. Fe(2+) is required as a cofactor. The cofactor is Ni(2+).

Its subcellular location is the cytoplasm. The protein localises to the nucleus. It carries out the reaction 1,2-dihydroxy-5-(methylsulfanyl)pent-1-en-3-one + O2 = 4-methylsulfanyl-2-oxobutanoate + formate + 2 H(+). The enzyme catalyses 1,2-dihydroxy-5-(methylsulfanyl)pent-1-en-3-one + O2 = 3-(methylsulfanyl)propanoate + CO + formate + 2 H(+). It functions in the pathway amino-acid biosynthesis; L-methionine biosynthesis via salvage pathway; L-methionine from S-methyl-5-thio-alpha-D-ribose 1-phosphate: step 5/6. In terms of biological role, catalyzes 2 different reactions between oxygen and the acireductone 1,2-dihydroxy-3-keto-5-methylthiopentene (DHK-MTPene) depending upon the metal bound in the active site. Fe-containing acireductone dioxygenase (Fe-ARD) produces formate and 2-keto-4-methylthiobutyrate (KMTB), the alpha-ketoacid precursor of methionine in the methionine recycle pathway. Ni-containing acireductone dioxygenase (Ni-ARD) produces methylthiopropionate, carbon monoxide and formate, and does not lie on the methionine recycle pathway. The chain is Acireductone dioxygenase 1 (ARD1) from Oryza sativa subsp. indica (Rice).